The chain runs to 181 residues: MSQSPIDYNESLRPDDMLDNELNYELANEVSAGDEEPYDDDIWESEDLEPVGHDIQPMDSVSDFHVKDFSEKKYSPYTDEIASAQLTGPSESAFGSASSLGTVESPVTMQSATLLWDPSVKEVDDILHNEDFYDGRDLNIFTLRGFVNILTLILLSCGLLMLFIGYPILSAVEVEKQRKKN.

Residues 25 to 47 (ELANEVSAGDEEPYDDDIWESED) form a disordered region. A compositionally biased stretch (acidic residues) spans 32–47 (AGDEEPYDDDIWESED). Residues 149 to 169 (ILTLILLSCGLLMLFIGYPIL) form a helical membrane-spanning segment.

Its subcellular location is the cytoplasm. It localises to the membrane. This is an uncharacterized protein from Schizosaccharomyces pombe (strain 972 / ATCC 24843) (Fission yeast).